Consider the following 91-residue polypeptide: Long neurotoxin OH-56 (91 aa).

A signal peptide spans 1–21 (MKTLLLTLVVVTIMCLDLGYT). Intrachain disulfides connect cysteine 24–cysteine 42, cysteine 35–cysteine 63, cysteine 48–cysteine 52, cysteine 67–cysteine 78, and cysteine 79–cysteine 84.

Belongs to the three-finger toxin family. Long-chain subfamily. Type II alpha-neurotoxin sub-subfamily. Expressed by the venom gland.

The protein localises to the secreted. Functionally, binds with high affinity to muscular (alpha-1/CHRNA1) and neuronal (alpha-7/CHRNA7) nicotinic acetylcholine receptor (nAChR) and inhibits acetylcholine from binding to the receptor, thereby impairing neuromuscular and neuronal transmission. The sequence is that of Long neurotoxin OH-56 from Ophiophagus hannah (King cobra).